The primary structure comprises 238 residues: Protein MIS12 homolog (238 aa).

Residues 117-149 (ELDAELDSLRDKLNVVGKRSVELDSELQALERS) are a coiled coil.

This sequence belongs to the mis12 family.

It localises to the chromosome. Its subcellular location is the centromere. It is found in the kinetochore. Its function is as follows. Constitutive component of kinetochores that is essential for proper cell division during mitotic cell cycle. May play a role in the modulation of centromere during meiosis. The chain is Protein MIS12 homolog from Arabidopsis thaliana (Mouse-ear cress).